Consider the following 831-residue polypeptide: MTDNQEIKPKKLTLGNSKLLLNKSFDSLTGAQSFVNAKSKTLVEVRKSSIGSTTTISLNKERNSLDQSVIDSNKEEFNRRLSILKKAAEQSKLHDPAQISTLSKLASINQSINSKNEQSITDKAVEQKHQNIEDNKVEIAAKIVQDNENISSQIPKKKKETLAKSVLVGMRTRYGIEEEPALEKTVDNKVVVPKIKLEESKKFKKADLFNMLSDDENGSGRTRSLASIKRAREKEKRKLVSQVPEKVYREVTIPEVIGVGDLANAMSERVADVIKELMKLGILANASQTIDADTAELVATNLGHTVTRVQESDVENILINDDKVEDLRTRAPVVTVMGHVDHGKTSLLDALKSTDIAAGELGGITQHIGAYRVTLADSKAITFIDTPGHEAFSEMRSRGAKVTDIVIIVVAADDGIKTQTVEAINHAKAAGVPIIVAINKIDKPDIDIERIKNELYVHEIIGEEAGGDVIFIPISALKKINLDKLEEAILLISEMQDLKASPFGLASGVVIESKIEKGRGTLTTILVQRGTLRNGDIIIAGTSYGKVKKMINDKGREILEATPSVPVEIQGLNEVPFAGDQFNVVQNEKQAKDIAEYRIRLAKEKKISVASRSSLEELLLKASGNSKIKELPLIIKCDVQGSIEAISGSLLKLPSDEIKLRILHSGVGPITESDVSLAHVSSAIVVGFNVRAWANALTAAEKTKVDIRYYSIIYNLIDDVKAIMSGMLEPIVREQYIGSVEIRQIFNITKIGKIAGSYVTKGIIKKGAGVRLLRDNVVIHAGKLKTLKRFKDEVKEVREGYECGIAFENYEDIREGDTVEVFELVQEQRQL.

A tr-type G domain is found at 329 to 499 (TRAPVVTVMG…LLISEMQDLK (171 aa)). Residues 338-345 (GHVDHGKT) are G1. GTP is bound at residue 338 to 345 (GHVDHGKT). Residues 363-367 (GITQH) are G2. The G3 stretch occupies residues 385-388 (DTPG). GTP is bound by residues 385-389 (DTPGH) and 439-442 (NKID). Residues 439 to 442 (NKID) are G4. Residues 475–477 (SAL) are G5.

The protein belongs to the TRAFAC class translation factor GTPase superfamily. Classic translation factor GTPase family. IF-2 subfamily.

It is found in the cytoplasm. One of the essential components for the initiation of protein synthesis. Protects formylmethionyl-tRNA from spontaneous hydrolysis and promotes its binding to the 30S ribosomal subunits. Also involved in the hydrolysis of GTP during the formation of the 70S ribosomal complex. This Rickettsia prowazekii (strain Madrid E) protein is Translation initiation factor IF-2 (infB).